The sequence spans 127 residues: MSQEFSRARRVGELLQRELARLFQEELKDPRVKLVTVSHVRVSPDLRQAKAYVTFLGKEEDTQEQLAVLNKAAGFLQHGLSQRVELRVIPRLQFVYDDSIERGRRLSALIDKAVQKETDGESDNSTE.

The protein belongs to the RbfA family. In terms of assembly, monomer. Binds 30S ribosomal subunits, but not 50S ribosomal subunits or 70S ribosomes.

It localises to the cytoplasm. Functionally, one of several proteins that assist in the late maturation steps of the functional core of the 30S ribosomal subunit. Associates with free 30S ribosomal subunits (but not with 30S subunits that are part of 70S ribosomes or polysomes). Required for efficient processing of 16S rRNA. May interact with the 5'-terminal helix region of 16S rRNA. The protein is Ribosome-binding factor A of Nitrosococcus oceani (strain ATCC 19707 / BCRC 17464 / JCM 30415 / NCIMB 11848 / C-107).